Here is a 279-residue protein sequence, read N- to C-terminus: Acyl-[acyl-carrier-protein]--UDP-N-acetylglucosamine O-acyltransferase (279 aa).

Residues 256 to 279 (IERGADKDALQDESVEKEGALVES) are disordered.

The protein belongs to the transferase hexapeptide repeat family. LpxA subfamily. Homotrimer.

The protein localises to the cytoplasm. The enzyme catalyses a (3R)-hydroxyacyl-[ACP] + UDP-N-acetyl-alpha-D-glucosamine = a UDP-3-O-[(3R)-3-hydroxyacyl]-N-acetyl-alpha-D-glucosamine + holo-[ACP]. It functions in the pathway glycolipid biosynthesis; lipid IV(A) biosynthesis; lipid IV(A) from (3R)-3-hydroxytetradecanoyl-[acyl-carrier-protein] and UDP-N-acetyl-alpha-D-glucosamine: step 1/6. Its function is as follows. Involved in the biosynthesis of lipid A, a phosphorylated glycolipid that anchors the lipopolysaccharide to the outer membrane of the cell. This chain is Acyl-[acyl-carrier-protein]--UDP-N-acetylglucosamine O-acyltransferase, found in Chlamydia caviae (strain ATCC VR-813 / DSM 19441 / 03DC25 / GPIC) (Chlamydophila caviae).